The primary structure comprises 251 residues: Triosephosphate isomerase (251 aa).

Residue 9–11 (NWK) coordinates substrate. Histidine 95 functions as the Electrophile in the catalytic mechanism. The active-site Proton acceptor is the glutamate 167. Residues glycine 173, serine 213, and 234 to 235 (GG) contribute to the substrate site.

It belongs to the triosephosphate isomerase family. Homodimer.

It is found in the cytoplasm. The enzyme catalyses D-glyceraldehyde 3-phosphate = dihydroxyacetone phosphate. It functions in the pathway carbohydrate biosynthesis; gluconeogenesis. The protein operates within carbohydrate degradation; glycolysis; D-glyceraldehyde 3-phosphate from glycerone phosphate: step 1/1. Functionally, involved in the gluconeogenesis. Catalyzes stereospecifically the conversion of dihydroxyacetone phosphate (DHAP) to D-glyceraldehyde-3-phosphate (G3P). The sequence is that of Triosephosphate isomerase from Enterococcus faecalis (strain ATCC 700802 / V583).